Here is a 793-residue protein sequence, read N- to C-terminus: Wall-associated receptor kinase-like 18 (793 aa).

An N-terminal signal peptide occupies residues 1 to 28 (MSNESTNCSFFLNLFMLLLLLIFYSADA). Residues 29–378 (CQRECGGISI…YRCVRDKTKA (350 aa)) are Extracellular-facing. 6 N-linked (GlcNAc...) asparagine glycosylation sites follow: N60, N130, N170, N238, N285, and N304. The interval 312-371 (CTCGRITISETSYANCGCTYGYTGNPYVLNGCKDIDECKVKFEYCGKTETCVNFEGGYRC) is atypical EGF-like. 3 disulfide bridges follow: C314-C327, C349-C362, and C356-C371. A helical membrane pass occupies residues 379-399 (IMIGAGTGFGVLVLVGGLWWL). At 400–793 (RKFLIKRRIT…VEPLFPRLTW (394 aa)) the chain is on the cytoplasmic side. The Protein kinase domain maps to 453–728 (FSENRVLGHG…REVFTELERI (276 aa)). ATP-binding positions include 459 to 467 (LGHGGQGTV) and K481. Y526 carries the post-translational modification Phosphotyrosine. D579 acts as the Proton acceptor in catalysis. 2 positions are modified to phosphothreonine: T613 and T618. Y626 carries the post-translational modification Phosphotyrosine. The disordered stretch occupies residues 733–757 (EDSQVHNRIDEEEEEEEEEEEVVTT). The segment covering 742-754 (DEEEEEEEEEEEV) has biased composition (acidic residues).

It belongs to the protein kinase superfamily. Ser/Thr protein kinase family.

The protein localises to the membrane. The enzyme catalyses L-seryl-[protein] + ATP = O-phospho-L-seryl-[protein] + ADP + H(+). It catalyses the reaction L-threonyl-[protein] + ATP = O-phospho-L-threonyl-[protein] + ADP + H(+). Its function is as follows. Serine/threonine-protein kinase that may function as a signaling receptor of extracellular matrix component. The sequence is that of Wall-associated receptor kinase-like 18 (WAKL18) from Arabidopsis thaliana (Mouse-ear cress).